A 1043-amino-acid chain; its full sequence is Desmoglein-1 (1043 aa).

A signal peptide spans 1–23 (MNWPFFRAAVVLFIFLVVLEVNS). A propeptide spanning residues 24-49 (DFRIQVRDYNTKNGTIKWHSLRRQKR) is cleaved from the precursor. Cadherin domains are found at residues 50–158 (EWIK…PVFS), 159–270 (MSTF…PYME), 271–385 (LPTQ…GSVF), and 386–498 (RPGS…VNGS). Residues 50–551 (EWIKFAAACR…PLRDNVHFGP (502 aa)) are Extracellular-facing. 2 N-linked (GlcNAc...) asparagine glycosylation sites follow: Asn-110 and Asn-180. N-linked (GlcNAc...) asparagine glycosylation is present at Asn-496. A helical transmembrane segment spans residues 552 to 572 (AGIGLLIMGFLVLGLVPFLLM). Over 573 to 1043 (CCDCGGAPGG…TKYSTVQYTK (471 aa)) the chain is Cytoplasmic. A disordered region spans residues 770-807 (DVEPFPDSDPSWPPKSTEPVCPPQGTEPTGGGHPPISP). 5 Desmoglein repeat repeats span residues 819–845 (TYPS…TVTE), 846–875 (SYTS…ERVV), 876–905 (GPIS…ERVI), 906–933 (APSS…ERVI), and 934–962 (QPTS…ERVV).

Binds to JUP/plakoglobin. Interacts with PKP2. Interacts with DSC3; there is evidence to suggest that the interaction promotes cell-cell adhesion of keratinocytes. As to expression, expressed in the epidermis. Expressed in the muzzle epithelium.

Its subcellular location is the cell membrane. It is found in the cell junction. It localises to the desmosome. The protein localises to the cytoplasm. The protein resides in the nucleus. In terms of biological role, component of intercellular desmosome junctions. Involved in the interaction of plaque proteins and intermediate filaments mediating cell-cell adhesion. The chain is Desmoglein-1 (DSG1) from Bos taurus (Bovine).